The sequence spans 504 residues: Prenylcysteine oxidase 1 (504 aa).

The signal sequence occupies residues 1-28 (MGRFAATLVGSLFGLGLLLCGLGRLASA). Asn-196, Asn-322, and Asn-352 each carry an N-linked (GlcNAc...) asparagine glycan.

The protein belongs to the prenylcysteine oxidase family. FAD serves as cofactor. As to expression, expressed mainly in cerebrum.

It is found in the lysosome. It carries out the reaction an S-polyprenyl-L-cysteine + O2 + H2O = a polyprenal + L-cysteine + H2O2. The catalysed reaction is S-(2E,6E)-farnesyl-L-cysteine + O2 + H2O = (2E,6E)-farnesal + L-cysteine + H2O2. The enzyme catalyses [(2E,6E,10E)-geranylgeranyl]-L-cysteine + O2 + H2O = (2E,6E,10E)-geranylgeranial + L-cysteine + H2O2. Functionally, prenylcysteine oxidase that cleaves the thioether bond of prenyl-L-cysteines, such as farnesylcysteine and geranylgeranylcysteine. Only active against free prenylcysteines and not prenylcysteine residues within prenylated proteins or peptides. Involved in the final step in the degradation of prenylated proteins, by degrading prenylcysteines after the protein has been degraded. This chain is Prenylcysteine oxidase 1, found in Rattus norvegicus (Rat).